The following is a 538-amino-acid chain: RNA-binding protein RO60 (538 aa).

Methionine 1 is modified (N-acetylmethionine). Phosphoserine is present on residues serine 4 and serine 19. The TROVE domain maps to 16–369 (IANSQDGYVW…TFKTVEPTGK (354 aa)). Residues 120-284 (RIPTHLFTFI…EMPLTALLRN (165 aa)) are RNA-binding. Residues lysine 224 and lysine 359 each carry the N6-acetyllysine modification. The tract at residues 361–538 (FKTVEPTGKR…VIRNFTLDMI (178 aa)) is VWFA-like domain. The a divalent metal cation site is built by serine 378, serine 380, and threonine 445.

This sequence belongs to the Ro 60 kDa family. Identified in a IGF2BP1-dependent mRNP granule complex containing untranslated mRNAs. Found in a complex with PUF60 and Y5 RNA. Interacts with RAB11FIP5.

It localises to the cytoplasm. In terms of biological role, RNA-binding protein that binds to misfolded non-coding RNAs, pre-5S rRNA, and several small cytoplasmic RNA molecules known as Y RNAs. Binds to endogenous Alu retroelements which are induced by type I interferon and stimulate porinflammatory cytokine secretion. Regulates the expression of Alu retroelements as well as inflammatory genes. May play roles in cilia formation and/or maintenance. This Homo sapiens (Human) protein is RNA-binding protein RO60.